Reading from the N-terminus, the 37-residue chain is Alpha-conotoxin LvIA (37 aa).

Positions 1–20 (FRGRDAAAKASGLVGLTDRR) are excised as a propeptide. 2 disulfides stabilise this stretch: C22–C28 and C23–C36. The interval 24–26 (SHP) is ser-Xaa-Pro motif, crucial for potent interaction with nAChR. Cysteine amide is present on C36.

This sequence belongs to the conotoxin A superfamily. Expressed by the venom duct.

It localises to the secreted. Functionally, alpha-conotoxins act on postsynaptic membranes, they bind to the nicotinic acetylcholine receptors (nAChR) and thus inhibit them. This toxin blocks alpha-3-beta-2/CHRNA3-CHRNB2 nAChR with high selectivity (IC(50)=8.67 nM (on rat) and 17.5 (on human)). Also has weaker activity on alpha-6/alpha-3-beta-2-beta-3 (CHRNA6/CHRNA3-CHRNB2-CHRNB3) (IC(50)=108 nM (on rat)), alpha-6/alpha-3-beta-4 (CHRNA6/CHRNA3-CHRNB4) (IC(50)=121 nM (on rat)), alpha-3-beta-4 (CHRNA3-CHRNB4) (IC(50)=148 nM (on rat)), and alpha-7/CHRNA7 nAChRs (IC(50)=3000 nM (on rat)). When tested on mouse with hot-plate tests, this toxin significantly increases the base pain threshold and shows analgesic effects. This Conus lividus (Livid cone) protein is Alpha-conotoxin LvIA.